Reading from the N-terminus, the 165-residue chain is Phosphopantetheine adenylyltransferase (165 aa).

Substrate is bound at residue S10. Residues 10 to 11 (SF) and H18 contribute to the ATP site. Positions 42, 79, and 93 each coordinate substrate. ATP is bound by residues 94–96 (GLR), E104, and 129–135 (VRPITAT).

This sequence belongs to the bacterial CoaD family. As to quaternary structure, homohexamer. Requires Mg(2+) as cofactor.

The protein resides in the cytoplasm. The catalysed reaction is (R)-4'-phosphopantetheine + ATP + H(+) = 3'-dephospho-CoA + diphosphate. It functions in the pathway cofactor biosynthesis; coenzyme A biosynthesis; CoA from (R)-pantothenate: step 4/5. Its function is as follows. Reversibly transfers an adenylyl group from ATP to 4'-phosphopantetheine, yielding dephospho-CoA (dPCoA) and pyrophosphate. The protein is Phosphopantetheine adenylyltransferase of Rhodopseudomonas palustris (strain BisA53).